The following is a 135-amino-acid chain: Transcriptional activator protein (135 aa).

The Nuclear localization signal signature appears at 17–32 (KAQHKVAKKRAIRRSR). The segment at 37–54 (CGCSYYIHINCRNYGFSH) is a zinc-finger region. Positions 82-102 (AAPSNSSRVPDVCDPNTDNVQ) are disordered. The tract at residues 120–135 (ALPLFDGDFWDDIIDF) is transactivation.

Belongs to the geminiviridae transcriptional activator protein family. As to quaternary structure, monomer. Homodimer. Homooligomer. Self-interaction correlates with nuclear localization and efficient activation of transcription. Monomers suppress local silencing by interacting with and inactivating host adenosine kinase 2 (ADK2) in the cytoplasm. Interacts with and inhibits host SNF1 kinase. Binds to ssDNA. Phosphorylated.

It is found in the host nucleus. Its subcellular location is the host cytoplasm. Its function is as follows. Strong activator of the late viral genes promoters. Enhances the expression of the capsid protein and nuclear shuttle protein. Acts as a suppressor of RNA-mediated gene silencing, also known as post-transcriptional gene silencing (PTGS), a mechanism of plant viral defense that limits the accumulation of viral RNAs. Suppresses the host RNA silencing by inhibiting adenosine kinase 2 (ADK2), a kinase involved in a general methylation pathway. Also suppresses the host basal defense by interacting with and inhibiting SNF1 kinase, a key regulator of cell metabolism implicated in innate antiviral defense. Determines pathogenicity. The protein is Transcriptional activator protein of Mungbean yellow mosaic virus (strain Vigna) (MYMV).